The primary structure comprises 333 residues: MNFQVTGLGLDKIKLDSPQSFLDQEEVEEAEDGQLLEPEAWRTYVERRNALQEFLTSDLSPHLLKRHHARMELLKKCSYYIEILPKHLALGDQNPLVLPTTMFQLIDPWKFQRMKKVGAAQTKIQLLLLGDLLEQLDHGRSELDALLESPDPRPFLAGWGLVEQRLADLSAVMDSFLAMMVPGRLHIKHRLVSDIGATKIPHIRLMLSTKMPVMFDRKESVAHQDWVSLRWFVTIQQAVPEQFELRYKLLDPRTQQECMQCGIIPVAACAFDIRNLLPNRAYKFTVKRAESYTLVYEPWRDSLTLHTRPGPPEGLAPSRLGKLGLSLTTPSER.

Positions 212-310 constitute a Fibronectin type-III domain; the sequence is PVMFDRKESV…DSLTLHTRPG (99 aa). Positions 307–333 are disordered; sequence TRPGPPEGLAPSRLGKLGLSLTTPSER.

The protein is Fibronectin type III domain-containing protein 11 of Bos taurus (Bovine).